The primary structure comprises 463 residues: Lactaldehyde dehydrogenase (463 aa).

220–225 (GSSKVG) contributes to the NAD(+) binding site. Catalysis depends on residues E240 and C274.

Belongs to the aldehyde dehydrogenase family. Homotetramer.

It catalyses the reaction (S)-lactaldehyde + NAD(+) + H2O = (S)-lactate + NADH + 2 H(+). The protein operates within cofactor biosynthesis; coenzyme F420 biosynthesis. Involved in F420 biosynthesis through the oxidation of lactaldehyde to lactate. The substrate preference order is propionaldehyde &gt; DL-lactaldehyde, DL-glyceraldehyde &gt; crotonaldehyde &gt; glycolaldehyde &gt; acetaldehyde, acrolein &gt; formaldehyde. No activity was observed towards methylglyoxal or glyceraldehyde-3-phosphate. Has a preference for NAD over NADP. This is Lactaldehyde dehydrogenase from Methanocaldococcus jannaschii (strain ATCC 43067 / DSM 2661 / JAL-1 / JCM 10045 / NBRC 100440) (Methanococcus jannaschii).